Here is a 454-residue protein sequence, read N- to C-terminus: UPF0210 protein Cphy_2797 (454 aa).

This sequence belongs to the UPF0210 family. Homodimer.

The polypeptide is UPF0210 protein Cphy_2797 (Lachnoclostridium phytofermentans (strain ATCC 700394 / DSM 18823 / ISDg) (Clostridium phytofermentans)).